The following is a 185-amino-acid chain: Ribosome-recycling factor (185 aa).

The protein belongs to the RRF family.

It is found in the cytoplasm. Its function is as follows. Responsible for the release of ribosomes from messenger RNA at the termination of protein biosynthesis. May increase the efficiency of translation by recycling ribosomes from one round of translation to another. The polypeptide is Ribosome-recycling factor (Lactococcus lactis subsp. lactis (strain IL1403) (Streptococcus lactis)).